Here is a 284-residue protein sequence, read N- to C-terminus: Gigasin-3a (284 aa).

The disordered stretch occupies residues 202–284 (GLDNPLPNPR…FKAGRKNNRN (83 aa)). The segment covering 223 to 245 (SSPLPESTPKSSTKTSSASPIKS) has biased composition (low complexity). Over residues 246-257 (RQGKKLRGKKQN) the composition is skewed to basic residues. A compositionally biased stretch (polar residues) spans 258 to 267 (KTGNTRFTYR). The span at 268 to 284 (NNKRNIKFKAGRKNNRN) shows a compositional bias: basic residues.

In terms of tissue distribution, component of the organic matrix of calcified shell layers.

This chain is Gigasin-3a, found in Magallana gigas (Pacific oyster).